Here is a 362-residue protein sequence, read N- to C-terminus: Dihydroorotate dehydrogenase (quinone) (362 aa).

FMN-binding positions include 62–66 and Thr86; that span reads AGYDK. Lys66 contributes to the substrate binding site. 111-115 lines the substrate pocket; sequence NRLGF. FMN is bound by residues Asn139 and Asn170. Position 170 (Asn170) interacts with substrate. Catalysis depends on Ser173, which acts as the Nucleophile. Asn175 contacts substrate. FMN-binding residues include Lys215 and Ser243. 244–245 is a substrate binding site; that stretch reads NT. FMN contacts are provided by residues Gly266, Gly295, and 316–317; that span reads YS.

It belongs to the dihydroorotate dehydrogenase family. Type 2 subfamily. In terms of assembly, monomer. The cofactor is FMN.

It localises to the cell membrane. It carries out the reaction (S)-dihydroorotate + a quinone = orotate + a quinol. It functions in the pathway pyrimidine metabolism; UMP biosynthesis via de novo pathway; orotate from (S)-dihydroorotate (quinone route): step 1/1. Functionally, catalyzes the conversion of dihydroorotate to orotate with quinone as electron acceptor. This chain is Dihydroorotate dehydrogenase (quinone), found in Rhizobium etli (strain ATCC 51251 / DSM 11541 / JCM 21823 / NBRC 15573 / CFN 42).